A 266-amino-acid polypeptide reads, in one-letter code: 4-hydroxy-tetrahydrodipicolinate reductase (266 aa).

NAD(+)-binding positions include 7 to 12 (GTIGRM), Glu33, 96 to 98 (GTT), and 120 to 123 (APNM). The active-site Proton donor/acceptor is the His153. His154 provides a ligand contact to (S)-2,3,4,5-tetrahydrodipicolinate. Lys157 functions as the Proton donor in the catalytic mechanism. 163 to 164 (GT) is a (S)-2,3,4,5-tetrahydrodipicolinate binding site.

Belongs to the DapB family.

Its subcellular location is the cytoplasm. It carries out the reaction (S)-2,3,4,5-tetrahydrodipicolinate + NAD(+) + H2O = (2S,4S)-4-hydroxy-2,3,4,5-tetrahydrodipicolinate + NADH + H(+). It catalyses the reaction (S)-2,3,4,5-tetrahydrodipicolinate + NADP(+) + H2O = (2S,4S)-4-hydroxy-2,3,4,5-tetrahydrodipicolinate + NADPH + H(+). It functions in the pathway amino-acid biosynthesis; L-lysine biosynthesis via DAP pathway; (S)-tetrahydrodipicolinate from L-aspartate: step 4/4. Its function is as follows. Catalyzes the conversion of 4-hydroxy-tetrahydrodipicolinate (HTPA) to tetrahydrodipicolinate. This Polynucleobacter necessarius subsp. necessarius (strain STIR1) protein is 4-hydroxy-tetrahydrodipicolinate reductase.